The sequence spans 330 residues: AH receptor-interacting protein (330 aa).

Ser-43 is subject to Phosphoserine. The PPIase FKBP-type domain maps to 54–146 (RVRGKPMELI…DLDALQQNPQ (93 aa)). TPR repeat units follow at residues 179–212 (VPLI…LKNL), 231–264 (TPLL…YDDN), and 265–298 (VKAY…DPAL).

Interacts with RET in the pituitary gland; this interaction prevents the formation of the AIP-survivin complex.

It is found in the cytoplasm. May play a positive role in AHR-mediated (aromatic hydrocarbon receptor) signaling, possibly by influencing its receptivity for ligand and/or its nuclear targeting. Functionally, cellular negative regulator of the hepatitis B virus (HBV) X protein. In Chlorocebus aethiops (Green monkey), this protein is AH receptor-interacting protein (AIP).